The following is a 397-amino-acid chain: Elongation factor Tu (397 aa).

The region spanning 10-207 is the tr-type G domain; it reads KPHVNVGTIG…TLDAYIPEPE (198 aa). Positions 19-26 are G1; it reads GHVDHGKT. 19–26 provides a ligand contact to GTP; the sequence is GHVDHGKT. Residue threonine 26 coordinates Mg(2+). Residues 60 to 64 form a G2 region; that stretch reads GITIA. The G3 stretch occupies residues 81 to 84; the sequence is DCPG. GTP-binding positions include 81–85 and 136–139; these read DCPGH and NKAD. The G4 stretch occupies residues 136–139; it reads NKAD. The interval 174–176 is G5; the sequence is SAL.

The protein belongs to the TRAFAC class translation factor GTPase superfamily. Classic translation factor GTPase family. EF-Tu/EF-1A subfamily. In terms of assembly, monomer.

It is found in the cytoplasm. The enzyme catalyses GTP + H2O = GDP + phosphate + H(+). Functionally, GTP hydrolase that promotes the GTP-dependent binding of aminoacyl-tRNA to the A-site of ribosomes during protein biosynthesis. This is Elongation factor Tu from Hahella chejuensis (strain KCTC 2396).